Reading from the N-terminus, the 186-residue chain is Ribosome-recycling factor (186 aa).

It belongs to the RRF family.

It is found in the cytoplasm. Its function is as follows. Responsible for the release of ribosomes from messenger RNA at the termination of protein biosynthesis. May increase the efficiency of translation by recycling ribosomes from one round of translation to another. The polypeptide is Ribosome-recycling factor (Bartonella tribocorum (strain CIP 105476 / IBS 506)).